A 102-amino-acid polypeptide reads, in one-letter code: MSRRCELTAKGPQVGHKVSHSNIKTKRRFLPNLCNVTFISDALGRNVRLRVSTNAIKSVDHNGGLDAYLMKANAAALSPRALELKRAIEKKAAEAAPVAKAS.

The segment at 1–20 (MSRRCELTAKGPQVGHKVSH) is disordered.

Belongs to the bacterial ribosomal protein bL28 family.

The protein is Large ribosomal subunit protein bL28 of Bradyrhizobium sp. (strain ORS 278).